A 129-amino-acid chain; its full sequence is Putative reactive intermediate deaminase TdcF (129 aa).

Residue Lys58 is modified to N6-(pyridoxal phosphate)lysine. Residues 105–107 and Glu120 contribute to the substrate site; that span reads RSC.

It belongs to the RutC family. Homotrimer.

Its pathway is amino-acid degradation; L-threonine degradation via propanoate pathway. May be a post-translational regulator that controls the metabolic fate of L-threonine or the potentially toxic intermediate 2-ketobutyrate. This Escherichia coli O6:H1 (strain CFT073 / ATCC 700928 / UPEC) protein is Putative reactive intermediate deaminase TdcF (tdcF).